We begin with the raw amino-acid sequence, 623 residues long: tRNA uridine 5-carboxymethylaminomethyl modification enzyme MnmG (623 aa).

12-17 provides a ligand contact to FAD; that stretch reads GAGHAG. 272–286 contacts NAD(+); that stretch reads GPRYCPSIEDKINRF.

This sequence belongs to the MnmG family. Homodimer. Heterotetramer of two MnmE and two MnmG subunits. FAD serves as cofactor.

Its subcellular location is the cytoplasm. Its function is as follows. NAD-binding protein involved in the addition of a carboxymethylaminomethyl (cmnm) group at the wobble position (U34) of certain tRNAs, forming tRNA-cmnm(5)s(2)U34. This chain is tRNA uridine 5-carboxymethylaminomethyl modification enzyme MnmG, found in Christiangramia forsetii (strain DSM 17595 / CGMCC 1.15422 / KT0803) (Gramella forsetii).